We begin with the raw amino-acid sequence, 1525 residues long: Multidrug resistance protein mrp-7 (1525 aa).

Residues 1–24 are Extracellular-facing; sequence MLSSFCGDGHPFSTGLPNVSICAQ. Asn18 carries N-linked (GlcNAc...) asparagine glycosylation. The chain crosses the membrane as a helical span at residues 25–45; the sequence is HTVLVWVPAAFFLLTLPFLSA. The Cytoplasmic segment spans residues 46 to 66; sequence QCHLTAQRFARLPFSAHFIIK. A helical membrane pass occupies residues 67-87; it reads LLLVAFLAANSLATWCYVLFS. Residues 88–94 are Extracellular-facing; sequence KNSYAAA. Residues 95–115 traverse the membrane as a helical segment; that stretch reads YYVYPGLWVLVWTGTFLVHLI. Residues 116 to 118 lie on the Cytoplasmic side of the membrane; the sequence is RLR. Residues 119–139 traverse the membrane as a helical segment; sequence CGLVSSGIQHVTSLIFLLCGA. The Extracellular segment spans residues 140 to 165; the sequence is PEFYQWIRMENSNSFPNDLTTTDSAQ. A helical transmembrane segment spans residues 166–186; sequence FLSIAYLSWYSALILYTFSLC. Topologically, residues 187-346 are cytoplasmic; that stretch reads FADPRGAKTD…APFWKGMALS (160 aa). Residues 305–587 form the ABC transmembrane type-1 1 domain; that stretch reads LLASTLKFVS…IALLINQAVQ (283 aa). Residues 347–367 form a helical membrane-spanning segment; it reads ILMFSVSELRSLILNGYFYIM. At 368–434 the chain is on the extracellular side; sequence FRMGTKIQTS…SCPYQITFAL (67 aa). Residues 435–455 form a helical membrane-spanning segment; the sequence is VYLFITLGYSALPGVVIMVIF. Topologically, residues 456–535 are cytoplasmic; the sequence is VPMNIISSMI…NILDSFNTAS (80 aa). Residues 536-556 traverse the membrane as a helical segment; that stretch reads PFLVALFSFGTFVLSNPSHLL. Residues 557–561 lie on the Extracellular side of the membrane; that stretch reads TPQIA. Residues 562 to 582 form a helical membrane-spanning segment; it reads FVSLALFNQLRSPMTMIALLI. Over 583–953 the chain is Cytoplasmic; sequence NQAVQAVVSN…ATYQLYVKAA (371 aa). The 228-residue stretch at 622-849 folds into the ABC transporter 1 domain; the sequence is VRVENLTASW…RGLFFDFMEE (228 aa). An ATP-binding site is contributed by 659 to 666; the sequence is GKVGSGKS. Residues 900–925 form a disordered region; sequence ELTTQISTMSSPEKPPTGTSPAAATE. The helical transmembrane segment at 954–974 threads the bilayer; the sequence is GYLLSIAFIGFFIVYMTLQIL. An ABC transmembrane type-1 2 domain is found at 959–1245; the sequence is IAFIGFFIVY…AVRQVSEIEA (287 aa). The Extracellular segment spans residues 975 to 1005; it reads RSFWLSAWSDEYDPDSPSAHPMAKGWRLGVY. A helical membrane pass occupies residues 1006-1026; that stretch reads GALGFSETACFFVALLALVFV. At 1027 to 1068 the chain is on the cytoplasmic side; the sequence is GQRASKNLHGPLIHNLMRSPMSFYDTTPLGRILNRCAKDIET. The chain crosses the membrane as a helical span at residues 1069-1089; the sequence is IDMMLPMNFRYLVMCVLQVAF. Thr1090 is a topological domain (extracellular). Residues 1091–1111 form a helical membrane-spanning segment; it reads LIVIIISTPLFAVVILPLALI. The Cytoplasmic portion of the chain corresponds to 1112–1184; the sequence is YLIFLRYYVP…RYSSLVSNRW (73 aa). Residues 1185-1205 traverse the membrane as a helical segment; sequence LAVRLEFVGNCIIFFAALFAV. Residues 1206-1525 are Extracellular-facing; the sequence is LSKEFGWITS…ADAAEQDKHE (320 aa). N-linked (GlcNAc...) asparagine glycosylation is present at Asn1228. The 235-residue stretch at 1282–1516 folds into the ABC transporter 2 domain; that stretch reads VKFDGYSTRY…KNSAFAKMVA (235 aa). 1316-1323 contacts ATP; that stretch reads GRTGAGKS. Residues Asn1358 and Asn1418 are each glycosylated (N-linked (GlcNAc...) asparagine).

Belongs to the ABC transporter superfamily. ABCC family. Conjugate transporter (TC 3.A.1.208) subfamily. As to expression, expressed in head neurons, including the dopamine (DA) motor neuron, and other cells in the body.

The protein resides in the cell membrane. Its function is as follows. Negatively regulates cellular toxicity by mediating the export of environmental toxicants such as methylmercury out of the cell. Plays a role in inhibiting methylmercury-induced dopamine (DA) motor neuron degeneration. Not involved in Mn(2+)- or Al(3+)-associated toxicity. The chain is Multidrug resistance protein mrp-7 from Caenorhabditis elegans.